The sequence spans 545 residues: Chaperonin GroEL 2 (545 aa).

ATP-binding positions include 29 to 32 (TLGP), 86 to 90 (DGTTT), Gly-414, and Asp-499.

The protein belongs to the chaperonin (HSP60) family. Forms a cylinder of 14 subunits composed of two heptameric rings stacked back-to-back. Interacts with the co-chaperonin GroES.

The protein localises to the cytoplasm. It carries out the reaction ATP + H2O + a folded polypeptide = ADP + phosphate + an unfolded polypeptide.. Together with its co-chaperonin GroES, plays an essential role in assisting protein folding. The GroEL-GroES system forms a nano-cage that allows encapsulation of the non-native substrate proteins and provides a physical environment optimized to promote and accelerate protein folding. The protein is Chaperonin GroEL 2 of Chloroflexus aurantiacus (strain ATCC 29366 / DSM 635 / J-10-fl).